Reading from the N-terminus, the 977-residue chain is Probable RNA-dependent RNA polymerase 5 (977 aa).

Positions 103–122 (EEMSVDSDAPSPKSLKSEDK) are disordered.

This sequence belongs to the RdRP family.

The enzyme catalyses RNA(n) + a ribonucleoside 5'-triphosphate = RNA(n+1) + diphosphate. Probably involved in the RNA silencing pathway and required for the generation of small interfering RNAs (siRNAs). In Arabidopsis thaliana (Mouse-ear cress), this protein is Probable RNA-dependent RNA polymerase 5 (RDR5).